The following is a 232-amino-acid chain: NAD(P)H-quinone oxidoreductase subunit K 1 (232 aa).

[4Fe-4S] cluster-binding residues include Cys-49, Cys-50, Cys-114, and Cys-145.

Belongs to the complex I 20 kDa subunit family. As to quaternary structure, NDH-1 can be composed of about 15 different subunits; different subcomplexes with different compositions have been identified which probably have different functions. Requires [4Fe-4S] cluster as cofactor.

It is found in the cellular thylakoid membrane. The enzyme catalyses a plastoquinone + NADH + (n+1) H(+)(in) = a plastoquinol + NAD(+) + n H(+)(out). It carries out the reaction a plastoquinone + NADPH + (n+1) H(+)(in) = a plastoquinol + NADP(+) + n H(+)(out). Functionally, NDH-1 shuttles electrons from an unknown electron donor, via FMN and iron-sulfur (Fe-S) centers, to quinones in the respiratory and/or the photosynthetic chain. The immediate electron acceptor for the enzyme in this species is believed to be plastoquinone. Couples the redox reaction to proton translocation, and thus conserves the redox energy in a proton gradient. Cyanobacterial NDH-1 also plays a role in inorganic carbon-concentration. This chain is NAD(P)H-quinone oxidoreductase subunit K 1, found in Acaryochloris marina (strain MBIC 11017).